Here is a 276-residue protein sequence, read N- to C-terminus: 2-dehydro-3-deoxyphosphooctonate aldolase (276 aa).

It belongs to the KdsA family.

The protein localises to the cytoplasm. It carries out the reaction D-arabinose 5-phosphate + phosphoenolpyruvate + H2O = 3-deoxy-alpha-D-manno-2-octulosonate-8-phosphate + phosphate. The protein operates within carbohydrate biosynthesis; 3-deoxy-D-manno-octulosonate biosynthesis; 3-deoxy-D-manno-octulosonate from D-ribulose 5-phosphate: step 2/3. It functions in the pathway bacterial outer membrane biogenesis; lipopolysaccharide biosynthesis. This chain is 2-dehydro-3-deoxyphosphooctonate aldolase, found in Xylella fastidiosa (strain M23).